The chain runs to 201 residues: Small ribosomal subunit protein uS4 (201 aa).

Positions 93–156 constitute an S4 RNA-binding domain; that stretch reads RRLDNMVYRL…KNLDIIKNAV (64 aa).

The protein belongs to the universal ribosomal protein uS4 family. In terms of assembly, part of the 30S ribosomal subunit. Contacts protein S5. The interaction surface between S4 and S5 is involved in control of translational fidelity.

In terms of biological role, one of the primary rRNA binding proteins, it binds directly to 16S rRNA where it nucleates assembly of the body of the 30S subunit. With S5 and S12 plays an important role in translational accuracy. The protein is Small ribosomal subunit protein uS4 of Limosilactobacillus reuteri subsp. reuteri (strain JCM 1112) (Lactobacillus reuteri).